We begin with the raw amino-acid sequence, 321 residues long: Ribose-phosphate pyrophosphokinase (321 aa).

Residues 44–46 (DGE) and 103–104 (RQ) each bind ATP. Mg(2+) contacts are provided by His137 and Asp179. Lys202 is a catalytic residue. D-ribose 5-phosphate contacts are provided by residues Arg204, Asp228, and 232-236 (DTAGT).

The protein belongs to the ribose-phosphate pyrophosphokinase family. Class I subfamily. As to quaternary structure, homohexamer. The cofactor is Mg(2+).

The protein resides in the cytoplasm. It catalyses the reaction D-ribose 5-phosphate + ATP = 5-phospho-alpha-D-ribose 1-diphosphate + AMP + H(+). Its pathway is metabolic intermediate biosynthesis; 5-phospho-alpha-D-ribose 1-diphosphate biosynthesis; 5-phospho-alpha-D-ribose 1-diphosphate from D-ribose 5-phosphate (route I): step 1/1. Functionally, involved in the biosynthesis of the central metabolite phospho-alpha-D-ribosyl-1-pyrophosphate (PRPP) via the transfer of pyrophosphoryl group from ATP to 1-hydroxyl of ribose-5-phosphate (Rib-5-P). The polypeptide is Ribose-phosphate pyrophosphokinase (Staphylococcus epidermidis (strain ATCC 35984 / DSM 28319 / BCRC 17069 / CCUG 31568 / BM 3577 / RP62A)).